The chain runs to 134 residues: MPISLKVLAPNKNVYQGEAEEVILPSTTGQLGVLPGHISLVTAIDIGVLRLRMNSQWQSIALMGGFAEIESDEVIVLVNNAEIGSDIDVQNAEQDLKEAKLVMTKFPENEKNSEKIKALQEISKAEARIQAAKN.

The protein belongs to the ATPase epsilon chain family. In terms of assembly, F-type ATPases have 2 components, CF(1) - the catalytic core - and CF(0) - the membrane proton channel. CF(1) has five subunits: alpha(3), beta(3), gamma(1), delta(1), epsilon(1). CF(0) has three main subunits: a, b and c.

It is found in the cellular thylakoid membrane. Its function is as follows. Produces ATP from ADP in the presence of a proton gradient across the membrane. In Prochlorococcus marinus (strain MIT 9312), this protein is ATP synthase epsilon chain.